Consider the following 100-residue polypeptide: Large ribosomal subunit protein bL27 (100 aa).

A propeptide spanning residues 1–9 (MLKMNLQLF) is cleaved from the precursor.

This sequence belongs to the bacterial ribosomal protein bL27 family. In terms of processing, the N-terminus is cleaved by ribosomal processing cysteine protease Prp.

The sequence is that of Large ribosomal subunit protein bL27 from Clostridium perfringens (strain ATCC 13124 / DSM 756 / JCM 1290 / NCIMB 6125 / NCTC 8237 / Type A).